The following is a 277-amino-acid chain: Carbonyl reductase [NADPH] 1 (277 aa).

Residue Ser2 is modified to N-acetylserine. A Phosphoserine modification is found at Ser2. NADP(+) is bound by residues 10-34, 63-64, and Asn90; these read VTGA…GDVV and DI. Glutathione-binding positions include 95 to 97 and Gln106; that span reads FKV. Position 140 (Ser140) interacts with substrate. 193 to 194 is a glutathione binding site; that stretch reads AY. The active-site Proton acceptor is the Tyr194. NADP(+) is bound by residues 194 to 198 and 231 to 233; these read YGVTK and VRT. At Lys239 the chain carries N6-1-carboxyethyl lysine. A disordered region spans residues 258–277; that stretch reads PPGAEGPHGQFVQDKKVEPW.

Belongs to the short-chain dehydrogenases/reductases (SDR) family. In terms of assembly, monomer.

It localises to the cytoplasm. The enzyme catalyses a secondary alcohol + NADP(+) = a ketone + NADPH + H(+). The catalysed reaction is prostaglandin F2alpha + NADP(+) = prostaglandin E2 + NADPH + H(+). It carries out the reaction prostaglandin E1 + NADP(+) = 15-oxoprostaglandin E1 + NADPH + H(+). It catalyses the reaction menadione + NADPH + H(+) = menadiol + NADP(+). The enzyme catalyses prostaglandin D2 + NADP(+) = 15-oxoprostaglandin D2 + NADPH + H(+). The catalysed reaction is prostaglandin E2 + NADP(+) = 15-oxoprostaglandin E2 + NADPH + H(+). It carries out the reaction prostaglandin F2alpha + NADP(+) = 15-oxoprostaglandin F2alpha + NADPH + H(+). It catalyses the reaction daunorubicin + NADPH + H(+) = 13-dihydrodaunorubicin + NADP(+). The enzyme catalyses S-nitrosoglutathione + NADPH + H(+) = S-(hydroxysulfenamide)glutathione + NADP(+). The catalysed reaction is a primary alcohol + NADP(+) = an aldehyde + NADPH + H(+). It carries out the reaction cortisol + NADPH + H(+) = 20beta-dihydrocortisol + NADP(+). It catalyses the reaction corticosterone + NADPH + H(+) = 20beta-dihydrocorticosterone + NADP(+). Functionally, NADPH-dependent reductase with broad substrate specificity. Catalyzes the reduction of a wide variety of carbonyl compounds including quinones, prostaglandins, menadione, plus various xenobiotics. Catalyzes the reduction of the antitumor anthracyclines doxorubicin and daunorubicin to the cardiotoxic compounds doxorubicinol and daunorubicinol. Can convert prostaglandin E to prostaglandin F2-alpha. Can bind glutathione, which explains its higher affinity for glutathione-conjugated substrates. Catalyzes the reduction of S-nitrosoglutathione. In addition, participates in the glucocorticoid metabolism by catalyzing the NADPH-dependent cortisol/corticosterone into 20beta-dihydrocortisol (20b-DHF) or 20beta-corticosterone (20b-DHB), which are weak agonists of NR3C1 and NR3C2 in adipose tissue. In Rattus norvegicus (Rat), this protein is Carbonyl reductase [NADPH] 1.